The primary structure comprises 625 residues: tRNA uridine 5-carboxymethylaminomethyl modification enzyme MnmG (625 aa).

13 to 18 (GGGHAG) provides a ligand contact to FAD. NAD(+) is bound at residue 273 to 287 (GPRYCPSIEDKVVRF).

The protein belongs to the MnmG family. As to quaternary structure, homodimer. Heterotetramer of two MnmE and two MnmG subunits. It depends on FAD as a cofactor.

It is found in the cytoplasm. Its function is as follows. NAD-binding protein involved in the addition of a carboxymethylaminomethyl (cmnm) group at the wobble position (U34) of certain tRNAs, forming tRNA-cmnm(5)s(2)U34. The chain is tRNA uridine 5-carboxymethylaminomethyl modification enzyme MnmG from Methylococcus capsulatus (strain ATCC 33009 / NCIMB 11132 / Bath).